The primary structure comprises 283 residues: 2-dehydro-3-deoxyphosphooctonate aldolase (283 aa).

The protein belongs to the KdsA family.

The protein localises to the cytoplasm. It catalyses the reaction D-arabinose 5-phosphate + phosphoenolpyruvate + H2O = 3-deoxy-alpha-D-manno-2-octulosonate-8-phosphate + phosphate. It functions in the pathway carbohydrate biosynthesis; 3-deoxy-D-manno-octulosonate biosynthesis; 3-deoxy-D-manno-octulosonate from D-ribulose 5-phosphate: step 2/3. The protein operates within bacterial outer membrane biogenesis; lipopolysaccharide biosynthesis. The protein is 2-dehydro-3-deoxyphosphooctonate aldolase of Prochlorococcus marinus (strain MIT 9313).